A 230-amino-acid polypeptide reads, in one-letter code: uncharacterized protein (230 aa).

The helical transmembrane segment at 93–115 threads the bilayer; it reads VFLYYFLIVYTSGNVDLISRFLF.

It belongs to the DUP/COS family.

Its subcellular location is the membrane. This is an uncharacterized protein from Saccharomyces cerevisiae (strain ATCC 204508 / S288c) (Baker's yeast).